A 476-amino-acid chain; its full sequence is uncharacterized protein (476 aa).

The LisH domain occupies 7-39; the sequence is SRFYTNLLIANYLKHNGLEDTLAAFIRETALPL.

This is an uncharacterized protein from Saccharomyces cerevisiae (strain ATCC 204508 / S288c) (Baker's yeast).